The chain runs to 88 residues: Putative membrane protein insertion efficiency factor (88 aa).

The protein belongs to the UPF0161 family.

The protein resides in the cell inner membrane. Could be involved in insertion of integral membrane proteins into the membrane. The chain is Putative membrane protein insertion efficiency factor from Koribacter versatilis (strain Ellin345).